A 103-amino-acid polypeptide reads, in one-letter code: Nucleoid-associated protein NIS_0256 (103 aa).

It belongs to the YbaB/EbfC family. Homodimer.

It is found in the cytoplasm. The protein localises to the nucleoid. Functionally, binds to DNA and alters its conformation. May be involved in regulation of gene expression, nucleoid organization and DNA protection. The protein is Nucleoid-associated protein NIS_0256 of Nitratiruptor sp. (strain SB155-2).